A 159-amino-acid chain; its full sequence is RNA pyrophosphohydrolase (159 aa).

Positions 6–149 (GFRPNVGIIL…KREVYRRALK (144 aa)) constitute a Nudix hydrolase domain. The Nudix box signature appears at 38–59 (GGINPDETPEDALYRELNEEVG).

The protein belongs to the Nudix hydrolase family. RppH subfamily. A divalent metal cation serves as cofactor.

Accelerates the degradation of transcripts by removing pyrophosphate from the 5'-end of triphosphorylated RNA, leading to a more labile monophosphorylated state that can stimulate subsequent ribonuclease cleavage. The chain is RNA pyrophosphohydrolase from Pseudomonas entomophila (strain L48).